Reading from the N-terminus, the 312-residue chain is MDIIFYHPTFDTQWWIEALRKAIPQARVRAWKSGDNDSADYALVWHPPVEMLAGRDLKAVFALGAGVDSILSKLQAHPEMLKPSVPLFRLEDTGMGEQMQEYAVSQVLHWFRRFDDYRIQQNSSHWQPLPEYHREDFTIGILGAGVLGSKVAQSLQTWRFPLRCWSRTRKSWPGVQSFAGREELSAFLSQCRVLINLLPNTPETVGIINQQLLEKLPDGAYLLNLARGVHVVEDDLLAALDSGKVKGAMLDVFNREPLPPESPLWQHPRVTITPHVAAITRPAEAVEYISRTIAQLEKGERLCGQVDRARGY.

Arg227 is an active-site residue. His275 functions as the Proton donor in the catalytic mechanism.

This sequence belongs to the D-isomer specific 2-hydroxyacid dehydrogenase family. GhrA subfamily.

It localises to the cytoplasm. The catalysed reaction is glycolate + NADP(+) = glyoxylate + NADPH + H(+). It carries out the reaction (R)-glycerate + NAD(+) = 3-hydroxypyruvate + NADH + H(+). It catalyses the reaction (R)-glycerate + NADP(+) = 3-hydroxypyruvate + NADPH + H(+). In terms of biological role, catalyzes the NADPH-dependent reduction of glyoxylate and hydroxypyruvate into glycolate and glycerate, respectively. This chain is Glyoxylate/hydroxypyruvate reductase A, found in Escherichia coli (strain UTI89 / UPEC).